The chain runs to 161 residues: Lipoprotein signal peptidase (161 aa).

The next 3 helical transmembrane spans lie at 9–29, 63–83, and 88–108; these read ISLLMTIIVLVFDQVSKWLIT, KMLFFYIITIIILIVLVIFYI, and FNLFMQVAISLLFAGALGNFI. Catalysis depends on residues Asp118 and Asp136. Residues 131-151 traverse the membrane as a helical segment; the sequence is IFNIADSSLTIGVIFVIIALI.

The protein belongs to the peptidase A8 family.

It is found in the cell membrane. The catalysed reaction is Release of signal peptides from bacterial membrane prolipoproteins. Hydrolyzes -Xaa-Yaa-Zaa-|-(S,diacylglyceryl)Cys-, in which Xaa is hydrophobic (preferably Leu), and Yaa (Ala or Ser) and Zaa (Gly or Ala) have small, neutral side chains.. The protein operates within protein modification; lipoprotein biosynthesis (signal peptide cleavage). Functionally, this protein specifically catalyzes the removal of signal peptides from prolipoproteins. In Staphylococcus epidermidis (strain ATCC 12228 / FDA PCI 1200), this protein is Lipoprotein signal peptidase.